Here is a 385-residue protein sequence, read N- to C-terminus: Deoxyhypusine synthase (385 aa).

NAD(+) is bound by residues 108–112 (SNLIS), 134–136 (TAG), Glu-140, and Asp-257. 139-140 (EE) is a spermidine binding site. Position 262 (Asp-262) interacts with spermidine. Gly-304 contacts NAD(+). His-309 provides a ligand contact to spermidine. 329–330 (TG) provides a ligand contact to NAD(+). Spermidine is bound by residues 335 to 337 (GSD) and 344 to 350 (EAVSWGK). The active-site Nucleophile is Lys-350. An NAD(+)-binding site is contributed by 363-364 (DV).

This sequence belongs to the deoxyhypusine synthase family. NAD(+) is required as a cofactor.

The enzyme catalyses [eIF5A protein]-L-lysine + spermidine = [eIF5A protein]-deoxyhypusine + propane-1,3-diamine. The protein operates within protein modification; eIF5A hypusination. Functionally, catalyzes the NAD-dependent oxidative cleavage of spermidine and the subsequent transfer of the butylamine moiety of spermidine to the epsilon-amino group of a specific lysine residue of the eIF-5A precursor protein to form the intermediate deoxyhypusine residue. This chain is Deoxyhypusine synthase (DYS1), found in Candida glabrata (strain ATCC 2001 / BCRC 20586 / JCM 3761 / NBRC 0622 / NRRL Y-65 / CBS 138) (Yeast).